A 153-amino-acid chain; its full sequence is ORM1-like protein 3 (153 aa).

At 1–21 (MNVGTAHSEVNPNTRVMNSRG) the chain is on the cytoplasmic side. Helical transmembrane passes span 22-42 (IWLSYVLGIGLLHIILLSIPF) and 43-63 (VSVPVVWTLTNLIHNMCMYIF). Residues 64–94 (LHTVKGTPFETPDQGKARLLTHWEQMDYGVQ) lie on the Cytoplasmic side of the membrane. Residues 95 to 117 (FTASRKFLTITPIILYFLTSFYT) traverse the membrane as a helical segment. At 118-121 (KYDR) the chain is on the extracellular side. A helical transmembrane segment spans residues 122 to 142 (VHFVINTISLLTVLIPKLPQF). P137 is subject to Hydroxyproline. The Cytoplasmic portion of the chain corresponds to 143–153 (HGVRLFGINKY).

It belongs to the ORM family. In terms of assembly, ceramide-sensitive subunit of the serine palmitoyltransferase (SPT) complex, which is also composed of SPTLC1, SPTLC2/3 and SPTSSA/B. When hydroxylated at Pro-137, ubiquitinated via 'Lys-48'-linkage, leading to proteasomal degradation. In endothelial cells, ORMDL3 proteasomal degradation is controlled by the sphingosine 1-phosphate receptor signaling pathway.

Its subcellular location is the endoplasmic reticulum membrane. Functionally, plays an essential role in the homeostatic regulation of sphingolipid de novo biosynthesis by modulating the activity of the serine palmitoyltransferase (SPT) in response to ceramide levels. When complexed to SPT, the binding of ceramides to its N-terminus stabilizes a conformation that block SPT substrate entry, hence preventing SPT catalytic activity. Through this mechanism, maintains ceramide levels at sufficient concentrations for the production of complex sphingolipids, but which prevents the accumulation of ceramides to levels that trigger apoptosis. In Danio rerio (Zebrafish), this protein is ORM1-like protein 3 (ormdl3).